The following is a 441-amino-acid chain: Proline--tRNA ligase (441 aa).

This sequence belongs to the class-II aminoacyl-tRNA synthetase family. ProS type 2 subfamily. As to quaternary structure, homodimer.

Its subcellular location is the cytoplasm. It catalyses the reaction tRNA(Pro) + L-proline + ATP = L-prolyl-tRNA(Pro) + AMP + diphosphate. In terms of biological role, catalyzes the attachment of proline to tRNA(Pro) in a two-step reaction: proline is first activated by ATP to form Pro-AMP and then transferred to the acceptor end of tRNA(Pro). The protein is Proline--tRNA ligase of Bartonella bacilliformis (strain ATCC 35685 / KC583 / Herrer 020/F12,63).